The chain runs to 362 residues: Prostaglandin F2-alpha receptor (362 aa).

Residues 1–31 (MSTNNSVQPVSPASELLSNTTCQLEEDLSIS) are Extracellular-facing. N-linked (GlcNAc...) asparagine glycosylation is found at Asn-4 and Asn-19. A helical membrane pass occupies residues 32–54 (FSIIFMTVGILSNSLAIAILMKA). At 55-69 (YQRFRQKYKSSFLLL) the chain is on the cytoplasmic side. Residues 70 to 90 (ASALVITDFFGHLINGTIAVF) traverse the membrane as a helical segment. The Extracellular portion of the chain corresponds to 91-109 (VYASDKDWIYFDKSNILCS). A disulfide bridge links Cys-108 with Cys-186. Residues 110 to 131 (IFGICMVFSGLCPLFLGSLMAI) form a helical membrane-spanning segment. At 132-152 (ERCIGVTKPIFHSTKITTKHV) the chain is on the cytoplasmic side. The helical transmembrane segment at 153 to 175 (KMMLSGVCFFAVFVALLPILGHR) threads the bilayer. The Extracellular segment spans residues 176 to 198 (DYKIQASRTWCFYKTDQIKDWED). The helical transmembrane segment at 199 to 224 (RFYLLLFAFLGLLALGISFVCNAITG) threads the bilayer. The Cytoplasmic portion of the chain corresponds to 225–250 (ISLLKVKFRSQQHRQGRSHHFEMVIQ). Residues 251–267 (LLGIMCVSCICWSPFLV) traverse the membrane as a helical segment. The Extracellular portion of the chain corresponds to 268–285 (TMASIGMNIQDFKDSCER). A helical membrane pass occupies residues 286-307 (TLFTLRMATWNQILDPWVYILL). The Cytoplasmic segment spans residues 308-362 (RKAVLRNLYVCTRRCCGVHVISLHVWELSSIKNSLKVAAISDLPVTEKVTQQTST).

Belongs to the G-protein coupled receptor 1 family.

Its subcellular location is the cell membrane. Functionally, receptor for prostaglandin F2-alpha (PGF2-alpha). The activity of this receptor is mediated by G proteins which activate a phosphatidylinositol-calcium second messenger system. Initiates luteolysis in the corpus luteum. This Ovis aries (Sheep) protein is Prostaglandin F2-alpha receptor (PTGFR).